We begin with the raw amino-acid sequence, 254 residues long: Acidic endochitinase (254 aa).

Residues 1 to 23 form the signal peptide; it reads MKFWGSVLALSFVVFLFLTGTLA. Glu91 acts as the Proton donor in catalysis. An intrachain disulfide couples Cys213 to Cys245.

The protein belongs to the glycosyl hydrolase 19 family. Chitinase class II subfamily.

It localises to the secreted. It catalyses the reaction Random endo-hydrolysis of N-acetyl-beta-D-glucosaminide (1-&gt;4)-beta-linkages in chitin and chitodextrins.. In terms of biological role, defense against chitin-containing fungal pathogens. In Petunia hybrida (Petunia), this protein is Acidic endochitinase.